The primary structure comprises 207 residues: Large ribosomal subunit protein uL4 (207 aa).

Belongs to the universal ribosomal protein uL4 family. Part of the 50S ribosomal subunit.

One of the primary rRNA binding proteins, this protein initially binds near the 5'-end of the 23S rRNA. It is important during the early stages of 50S assembly. It makes multiple contacts with different domains of the 23S rRNA in the assembled 50S subunit and ribosome. Functionally, forms part of the polypeptide exit tunnel. This is Large ribosomal subunit protein uL4 from Geobacter sulfurreducens (strain ATCC 51573 / DSM 12127 / PCA).